We begin with the raw amino-acid sequence, 113 residues long: Probable mesentericin-Y105 immunity protein (113 aa).

This sequence belongs to the immunity protein EntA family.

Its function is as follows. Imparts immunity to mesentericin-Y105 to naturally sensitive host strains. The protein is Probable mesentericin-Y105 immunity protein (mesI) of Leuconostoc mesenteroides.